Reading from the N-terminus, the 100-residue chain is EKC/KEOPS complex subunit GON7 (100 aa).

The residue at position 1 (Met1) is an N-acetylmethionine. The segment at 50-100 (SPVQGEAQDRVAAAPEEALDGDDEDDAEDENNIDNRTNSDGPTAKRPKPPS) is disordered. A compositionally biased stretch (acidic residues) spans 66-81 (EALDGDDEDDAEDENN).

In terms of assembly, component of the EKC/KEOPS complex composed of at least GON7, TP53RK, TPRKB, OSGEP and LAGE3; the whole complex dimerizes.

It is found in the nucleus. Component of the EKC/KEOPS complex that is required for the formation of a threonylcarbamoyl group on adenosine at position 37 (t(6)A37) in tRNAs that read codons beginning with adenine. The complex is probably involved in the transfer of the threonylcarbamoyl moiety of threonylcarbamoyl-AMP (TC-AMP) to the N6 group of A37. GON7 plays a supporting role to the catalytic subunit OSGEP in the complex. The chain is EKC/KEOPS complex subunit GON7 from Sus scrofa (Pig).